Reading from the N-terminus, the 508-residue chain is Photosystem II CP47 reaction center protein (508 aa).

Helical transmembrane passes span 21-36, 101-115, 140-156, 203-218, 237-252, and 457-472; these read AVHI…WAGS, IVFS…TWHW, GIHL…FGAF, VAAG…FHLS, VLSS…AFIV, and TFAL…HGAR.

The protein belongs to the PsbB/PsbC family. PsbB subfamily. PSII is composed of 1 copy each of membrane proteins PsbA, PsbB, PsbC, PsbD, PsbE, PsbF, PsbH, PsbI, PsbJ, PsbK, PsbL, PsbM, PsbT, PsbX, PsbY, PsbZ, Psb30/Ycf12, at least 3 peripheral proteins of the oxygen-evolving complex and a large number of cofactors. It forms dimeric complexes. It depends on Binds multiple chlorophylls. PSII binds additional chlorophylls, carotenoids and specific lipids. as a cofactor.

Its subcellular location is the plastid. It is found in the chloroplast thylakoid membrane. Functionally, one of the components of the core complex of photosystem II (PSII). It binds chlorophyll and helps catalyze the primary light-induced photochemical processes of PSII. PSII is a light-driven water:plastoquinone oxidoreductase, using light energy to abstract electrons from H(2)O, generating O(2) and a proton gradient subsequently used for ATP formation. This chain is Photosystem II CP47 reaction center protein, found in Welwitschia mirabilis (Tree tumbo).